Here is a 425-residue protein sequence, read N- to C-terminus: Dihydroorotase (425 aa).

Positions 59 and 61 each coordinate Zn(2+). Substrate is bound by residues 61-63 (HLR) and Asn93. Zn(2+) is bound by residues Asp151, His178, and His231. Asn277 is a substrate binding site. Residue Asp304 coordinates Zn(2+). Asp304 is an active-site residue. Residues His308 and 322-323 (FG) contribute to the substrate site.

This sequence belongs to the metallo-dependent hydrolases superfamily. DHOase family. Class I DHOase subfamily. Zn(2+) is required as a cofactor.

It catalyses the reaction (S)-dihydroorotate + H2O = N-carbamoyl-L-aspartate + H(+). Its pathway is pyrimidine metabolism; UMP biosynthesis via de novo pathway; (S)-dihydroorotate from bicarbonate: step 3/3. Catalyzes the reversible cyclization of carbamoyl aspartate to dihydroorotate. The sequence is that of Dihydroorotase from Staphylococcus epidermidis (strain ATCC 12228 / FDA PCI 1200).